The sequence spans 382 residues: Gap junction alpha-1 protein (382 aa).

At 2 to 23 the chain is on the cytoplasmic side; sequence GDWSALGKLLDKVQAYSTAGGK. Ser5 carries the phosphoserine modification. The helical transmembrane segment at 24 to 44 threads the bilayer; it reads VWLSVLFIFRILLLGTAVESA. Residues 45-76 are Extracellular-facing; sequence WGDEQSAFRCNTQQPGCENVCYDKSFPISHVR. Cystine bridges form between Cys54–Cys192 and Cys187–Cys198. The chain crosses the membrane as a helical span at residues 77–97; sequence FWVLQIIFVSVPTLLYLAHVF. The Cytoplasmic segment spans residues 98–155; it reads YVMRKEEKLNKKEEELKVAQTDGVNVEMHLKQIEIKKFKYGIEEHGKVKMRGGLLRTY. Residue Lys144 forms a Glycyl lysine isopeptide (Lys-Gly) (interchain with G-Cter in SUMO) linkage. The helical transmembrane segment at 156–176 threads the bilayer; that stretch reads IISILFKSVFEVAFLLIQWYI. Residues 177–207 lie on the Extracellular side of the membrane; sequence YGFSLSAVYTCKRDPCPHQVDCFLSRPTEKT. Residues 208-228 form a helical membrane-spanning segment; it reads IFIIFMLVVSLVSLALNIIEL. Residues 229-382 lie on the Cytoplasmic side of the membrane; sequence FYVFFKGVKD…SRPRPDDLEI (154 aa). Lys237 is covalently cross-linked (Glycyl lysine isopeptide (Lys-Gly) (interchain with G-Cter in SUMO)). Residues 244 to 382 are interaction with NOV; the sequence is SDPYHATTGP…SRPRPDDLEI (139 aa). Phosphotyrosine is present on Tyr247. Residues Ser255, Ser257, and Ser262 each carry the phosphoserine modification. An interaction with UBQLN4 region spans residues 264–382; that stretch reads KYAYFNGCSS…SRPRPDDLEI (119 aa). The residue at position 271 (Cys271) is an S-nitrosocysteine. Thr275 carries the post-translational modification Phosphothreonine. Phosphoserine occurs at positions 306, 314, and 325. A compositionally biased stretch (polar residues) spans 317–332; it reads QNRMGQAGSTISNSHA. The segment at 317–382 is disordered; sequence QNRMGQAGST…SRPRPDDLEI (66 aa). Thr326 bears the Phosphothreonine mark. Phosphoserine occurs at positions 328, 330, and 365. Over residues 362-374 the composition is skewed to low complexity; sequence RPSSRASSRASSR. Ser368 is modified (phosphoserine; by PKC/PRKCG and PKC/PRKCD). Phosphoserine is present on residues Ser369 and Ser373.

The protein belongs to the connexin family. Alpha-type (group II) subfamily. In terms of assembly, a connexon is composed of a hexamer of connexins. Interacts with SGSM3. Interacts with RIC1/CIP150. Interacts with CNST and CSNK1D. Interacts (via C-terminus) with TJP1. Interacts (via C-terminus) with SRC (via SH3 domain). Interacts (not ubiquitinated) with UBQLN4 (via UBA domain). Interacts with NOV. Interacts with TMEM65. Interacts with ANK3/ANKG and PKP2. Contains at least one intramolecular disulfide bond. In terms of processing, phosphorylation at Ser-325, Ser-328 and Ser-330 by CK1 modulates gap junction assembly. Phosphorylated at Ser-368 by PRKCG; phosphorylation induces disassembly of gap junction plaques and inhibition of gap junction activity. Phosphorylation at Ser-368 by PRKCD triggers its internalization into small vesicles leading to proteasome-mediated degradation. Post-translationally, sumoylated with SUMO1, SUMO2 and SUMO3, which may regulate the level of functional Cx43 gap junctions at the plasma membrane. May be desumoylated by SENP1 or SENP2. S-nitrosylation at Cys-271 is enriched at the muscle endothelial gap junction in arteries, it augments channel permeability and may regulate of smooth muscle cell to endothelial cell communication. In terms of processing, acetylated in the developing cortex; leading to delocalization from the cell membrane. Detected in ventricle and atrium (at protein level).

It is found in the cell membrane. It localises to the cell junction. The protein localises to the gap junction. Its subcellular location is the endoplasmic reticulum. Its function is as follows. Gap junction protein that acts as a regulator of bladder capacity. A gap junction consists of a cluster of closely packed pairs of transmembrane channels, the connexons, through which materials of low MW diffuse from one cell to a neighboring cell. Negative regulator of bladder functional capacity: acts by enhancing intercellular electrical and chemical transmission, thus sensitizing bladder muscles to cholinergic neural stimuli and causing them to contract. May play a role in cell growth inhibition through the regulation of NOV expression and localization. Plays an essential role in gap junction communication in the ventricles. This is Gap junction alpha-1 protein (Gja1) from Rattus norvegicus (Rat).